A 1105-amino-acid chain; its full sequence is DNA polymerase delta catalytic subunit (1105 aa).

Residues 1–46 (MSSGGRGGKRRGAPPPGPSGAAAKRAHPGGTPQPPPPAATAAAPVA) form a disordered region. 4 residues coordinate Zn(2+): cysteine 1015, cysteine 1018, cysteine 1030, and cysteine 1033. Residues 1015–1033 (CLGCKAVISGSNQTLCFHC) form a CysA-type zinc finger. Residues cysteine 1062, cysteine 1065, cysteine 1075, and cysteine 1080 each coordinate [4Fe-4S] cluster. The CysB motif signature appears at 1062 to 1080 (CQECQGSLHQDVLCTSRDC).

This sequence belongs to the DNA polymerase type-B family. Heterodimer with subunits of 125 kDa and 50 kDa. The 125 kDa subunit contains the polymerase active site and most likely the active site for the 3'-5' exonuclease activity. The cofactor is [4Fe-4S] cluster.

The protein localises to the nucleus. The enzyme catalyses DNA(n) + a 2'-deoxyribonucleoside 5'-triphosphate = DNA(n+1) + diphosphate. Functionally, this polymerase possesses two enzymatic activities: DNA synthesis (polymerase) and an exonucleolytic activity that degrades single-stranded DNA in the 3'- to 5'-direction. The protein is DNA polymerase delta catalytic subunit (POLD1) of Oryza sativa subsp. japonica (Rice).